The sequence spans 701 residues: Glycine--tRNA ligase beta subunit (701 aa).

This sequence belongs to the class-II aminoacyl-tRNA synthetase family. As to quaternary structure, tetramer of two alpha and two beta subunits.

The protein resides in the cytoplasm. The catalysed reaction is tRNA(Gly) + glycine + ATP = glycyl-tRNA(Gly) + AMP + diphosphate. The protein is Glycine--tRNA ligase beta subunit of Helicobacter pylori (strain HPAG1).